Consider the following 356-residue polypeptide: Histidinol-phosphate aminotransferase (356 aa).

Lys211 carries the N6-(pyridoxal phosphate)lysine modification.

It belongs to the class-II pyridoxal-phosphate-dependent aminotransferase family. Histidinol-phosphate aminotransferase subfamily. Homodimer. Requires pyridoxal 5'-phosphate as cofactor.

The enzyme catalyses L-histidinol phosphate + 2-oxoglutarate = 3-(imidazol-4-yl)-2-oxopropyl phosphate + L-glutamate. It functions in the pathway amino-acid biosynthesis; L-histidine biosynthesis; L-histidine from 5-phospho-alpha-D-ribose 1-diphosphate: step 7/9. This is Histidinol-phosphate aminotransferase from Blochmanniella floridana.